A 393-amino-acid polypeptide reads, in one-letter code: S-adenosylmethionine synthase 4 (393 aa).

Residue Glu-9 participates in Mg(2+) binding. His-15 lines the ATP pocket. Glu-43 is a K(+) binding site. 2 residues coordinate L-methionine: Glu-56 and Gln-99. Residues Asp-167–Lys-169, Ser-235–Phe-238, Asp-246, Arg-252–Lys-253, Ala-269, Lys-273, and Lys-277 each bind ATP. Asp-246 serves as a coordination point for L-methionine. Lys-277 contacts L-methionine.

It belongs to the AdoMet synthase family. As to quaternary structure, homotetramer. The cofactor is Mn(2+). Mg(2+) serves as cofactor. It depends on Co(2+) as a cofactor. Requires K(+) as cofactor. Detected in trichomes (at the protein level).

The protein resides in the cytoplasm. The catalysed reaction is L-methionine + ATP + H2O = S-adenosyl-L-methionine + phosphate + diphosphate. It participates in amino-acid biosynthesis; S-adenosyl-L-methionine biosynthesis; S-adenosyl-L-methionine from L-methionine: step 1/1. Functionally, catalyzes the formation of S-adenosylmethionine from methionine and ATP. The reaction comprises two steps that are both catalyzed by the same enzyme: formation of S-adenosylmethionine (AdoMet) and triphosphate, and subsequent hydrolysis of the triphosphate. This Arabidopsis thaliana (Mouse-ear cress) protein is S-adenosylmethionine synthase 4 (METK4).